We begin with the raw amino-acid sequence, 49 residues long: Large ribosomal subunit protein bL32c (49 aa).

Residues 1–23 (MTPKKRKSKSKKNLRKTNWKKKA) form a disordered region.

The protein belongs to the bacterial ribosomal protein bL32 family.

The protein resides in the plastid. It is found in the chloroplast. This is Large ribosomal subunit protein bL32c from Oltmannsiellopsis viridis (Marine flagellate).